Consider the following 859-residue polypeptide: MSVVGLDVGSQSCYIAVARAGGIETIANEFSDRCTPSVISFGSKNRTIGVAAKSQQITHANNTVSNFKRFHGRAFNDPFIQKEKENLSYDLVPMKNGGVGIKVMYMDEEHLFSVEQITAMLLTKLKETAENNLKKPVTDCVISVPSFFTDAERRSVLDAAQIVGLNCLRLMNDMTAVALNYGIYKQDLPSLDEKPRIVVFVDMGHSAFQVSACAFNKGKLKVLGTAFDPFLGGKNFDAKLVEYFCAEFKTKYKLDAKSKIRALLRLYQECEKLKKLMSSNSTDLPLNIECFMNDKDVSGKMNRAQFEELCADLLQKIEVPLYLLMEQTQLKVEDVSAVEIVGGTTRIPAVKEKIAKFFGKDVSTTLNADEAVARGCALQCAILSPAFKVREFSVTDAVPFPISLVWSHDSEDAEGVHEVFSRNHAAPFSKVLTFLRSGPFELEAFYSDPQGVPYPEAKIGRFIVQNVSAQKDGEKSRVKVKVRVNTHGIFTISTASMVEKIPAEENEVSSLEADMDCQNQRPPENPDAEKNIQQDNNEAGTQPQVQTDGHQTSQSPPSPELTSEENKIPDADKANEKKVDQPPEAKKPKIKVVNVELPIEANLVWQLGKDLLNMYIETEGKMIMQDKLEKERNDAKNAVEEYVYEFRDKLCGPYEKFICEQDHQKFLRLLTETENWLYEEGEDQAKQAYVDKLEELMKIGTPIKVRFQEAEERPKIFEELGQRLQHYAKIAADFRNNDEKYNHIDESEMKKVEKSVNEMMEWMNNVMSAQAKKSLDQDPVVCAQEIRAKIKELNNNCEPVVTQPKPKIESPKLERTPNGPSTDKKEEDLDGKNNFSAEPPHQNGECYPNEKSSINMDLD.

Serine 2 carries the post-translational modification N-acetylserine. Position 471 is an N6-acetyllysine (lysine 471). A phosphoserine mark is found at serine 509 and serine 510. Disordered regions lie at residues 515-585 (MDCQ…PPEA) and 797-859 (CEPV…MDLD). Positions 533-555 (QQDNNEAGTQPQVQTDGHQTSQS) are enriched in polar residues. Position 558 is a phosphoserine (serine 558). At threonine 562 the chain carries Phosphothreonine. Composition is skewed to basic and acidic residues over residues 564-585 (EENK…PPEA) and 806-815 (PKIESPKLER). Serine 810 carries the post-translational modification Phosphoserine. Threonine 816 is modified (phosphothreonine). Residues 822 to 831 (TDKKEEDLDG) show a composition bias toward basic and acidic residues. Residues 850 to 859 (EKSSINMDLD) are compositionally biased toward polar residues.

This sequence belongs to the heat shock protein 70 family. As to quaternary structure, interacts with HSPA8/HSC70. Interacts with HSPA1A (via NBD) and HSPA1B (via NBD). In terms of processing, phosphorylation on Ser-509 may be important for regulation of the HSPA8/HSC70 chaperone activity.

It localises to the cytoplasm. Its function is as follows. Acts as a nucleotide-exchange factor (NEF) for chaperone proteins HSPA1A and HSPA1B, promoting the release of ADP from HSPA1A/B thereby triggering substrate release. Prevents the aggregation of denatured proteins in cells under severe stress, on which the ATP levels decrease markedly. Inhibits HSPA8/HSC70 ATPase and chaperone activities. This Bos taurus (Bovine) protein is Heat shock protein 105 kDa (HSPH1).